The sequence spans 820 residues: Potassium channel GORK (820 aa).

Residues methionine 1–glutamate 69 lie on the Cytoplasmic side of the membrane. A helical transmembrane segment spans residues methionine 70 to phenylalanine 90. At arginine 91 to leucine 97 the chain is on the extracellular side. Residues phenylalanine 98–valine 118 traverse the membrane as a helical segment. Topologically, residues alanine 119–lysine 141 are cytoplasmic. The chain crosses the membrane as a helical span at residues serine 142–glycine 162. Residues lysine 163 to arginine 168 are Extracellular-facing. Residues tyrosine 169 to glutamate 189 traverse the membrane as a helical; Voltage-sensor segment. Residues lysine 190–lysine 203 are Cytoplasmic-facing. A helical membrane pass occupies residues leucine 204 to threonine 224. Topologically, residues threonine 225–threonine 259 are extracellular. Residues threonine 260–alanine 279 constitute an intramembrane region (pore-forming). Residues valine 280 to methionine 285 are Extracellular-facing. Residues isoleucine 286–isoleucine 306 form a helical membrane-spanning segment. At threonine 307 to threonine 820 the chain is on the cytoplasmic side. Leucine 386 to glutamate 508 lines the a nucleoside 3',5'-cyclic phosphate pocket. ANK repeat units follow at residues glutamate 528–lysine 559, aspartate 563–leucine 592, phenylalanine 596–leucine 625, aspartate 627–serine 656, aspartate 660–serine 689, and tryptophan 693–serine 722. One can recognise a KHA domain in the interval lysine 740–threonine 820.

Belongs to the potassium channel family. Plant (TC 1.A.1.4) subfamily. In terms of assembly, the potassium channel is probably composed of a homo- or heterotetrameric complex of pore-forming subunits. In terms of tissue distribution, expressed in guard cell-containing tissues, in root epidermal cells and in root hairs. Detected in vascular cells of the root and shoot.

The protein resides in the membrane. In terms of biological role, major selective outward-rectifying potassium channel of the guard cell membrane. Involved in regulation of stomatal movements according to the water status. Assuming opened or closed conformations in response to the voltage difference across the membrane, the channel is activated by depolarization. Conductance of the channel is modulated in a potassium-dependent fashion. May interact with the cytoskeleton or with regulatory proteins. The chain is Potassium channel GORK (GORK) from Arabidopsis thaliana (Mouse-ear cress).